We begin with the raw amino-acid sequence, 355 residues long: UDP-N-acetylglucosamine--N-acetylmuramyl-(pentapeptide) pyrophosphoryl-undecaprenol N-acetylglucosamine transferase (355 aa).

Arg-166, Ser-196, and Gln-290 together coordinate UDP-N-acetyl-alpha-D-glucosamine.

This sequence belongs to the glycosyltransferase 28 family. MurG subfamily.

It localises to the cell membrane. The enzyme catalyses Mur2Ac(oyl-L-Ala-gamma-D-Glu-L-Lys-D-Ala-D-Ala)-di-trans,octa-cis-undecaprenyl diphosphate + UDP-N-acetyl-alpha-D-glucosamine = beta-D-GlcNAc-(1-&gt;4)-Mur2Ac(oyl-L-Ala-gamma-D-Glu-L-Lys-D-Ala-D-Ala)-di-trans,octa-cis-undecaprenyl diphosphate + UDP + H(+). The protein operates within cell wall biogenesis; peptidoglycan biosynthesis. Cell wall formation. Catalyzes the transfer of a GlcNAc subunit on undecaprenyl-pyrophosphoryl-MurNAc-pentapeptide (lipid intermediate I) to form undecaprenyl-pyrophosphoryl-MurNAc-(pentapeptide)GlcNAc (lipid intermediate II). This chain is UDP-N-acetylglucosamine--N-acetylmuramyl-(pentapeptide) pyrophosphoryl-undecaprenol N-acetylglucosamine transferase, found in Staphylococcus haemolyticus (strain JCSC1435).